Consider the following 343-residue polypeptide: Holliday junction branch migration complex subunit RuvB (343 aa).

The segment at 1-182 is large ATPase domain (RuvB-L); sequence MRDELLNTPT…FGISNRLDYY (182 aa). ATP is bound by residues I21, R22, G63, K66, T67, T68, 129–131, R172, Y182, and R219; that span reads EDF. T67 contacts Mg(2+). Positions 183–253 are small ATPAse domain (RuvB-S); it reads SAELLQRIII…LARKTLAALE (71 aa). The segment at 256-343 is head domain (RuvB-H); the sequence is EDGLDDMDKK…DGPLFQKGSS (88 aa). The DNA site is built by R311 and R316.

The protein belongs to the RuvB family. In terms of assembly, homohexamer. Forms an RuvA(8)-RuvB(12)-Holliday junction (HJ) complex. HJ DNA is sandwiched between 2 RuvA tetramers; dsDNA enters through RuvA and exits via RuvB. An RuvB hexamer assembles on each DNA strand where it exits the tetramer. Each RuvB hexamer is contacted by two RuvA subunits (via domain III) on 2 adjacent RuvB subunits; this complex drives branch migration. In the full resolvosome a probable DNA-RuvA(4)-RuvB(12)-RuvC(2) complex forms which resolves the HJ.

Its subcellular location is the cytoplasm. It carries out the reaction ATP + H2O = ADP + phosphate + H(+). The RuvA-RuvB-RuvC complex processes Holliday junction (HJ) DNA during genetic recombination and DNA repair, while the RuvA-RuvB complex plays an important role in the rescue of blocked DNA replication forks via replication fork reversal (RFR). RuvA specifically binds to HJ cruciform DNA, conferring on it an open structure. The RuvB hexamer acts as an ATP-dependent pump, pulling dsDNA into and through the RuvAB complex. RuvB forms 2 homohexamers on either side of HJ DNA bound by 1 or 2 RuvA tetramers; 4 subunits per hexamer contact DNA at a time. Coordinated motions by a converter formed by DNA-disengaged RuvB subunits stimulates ATP hydrolysis and nucleotide exchange. Immobilization of the converter enables RuvB to convert the ATP-contained energy into a lever motion, pulling 2 nucleotides of DNA out of the RuvA tetramer per ATP hydrolyzed, thus driving DNA branch migration. The RuvB motors rotate together with the DNA substrate, which together with the progressing nucleotide cycle form the mechanistic basis for DNA recombination by continuous HJ branch migration. Branch migration allows RuvC to scan DNA until it finds its consensus sequence, where it cleaves and resolves cruciform DNA. This is Holliday junction branch migration complex subunit RuvB from Prosthecochloris aestuarii (strain DSM 271 / SK 413).